Here is a 776-residue protein sequence, read N- to C-terminus: Mitochondrial intermediate peptidase (776 aa).

The N-terminal 28 residues, 1-28 (MRRFSTLSRRLQRVVPASSASTANTSPS), are a transit peptide targeting the mitochondrion. His561 lines the Zn(2+) pocket. Residue Glu562 is part of the active site. Positions 565 and 568 each coordinate Zn(2+).

This sequence belongs to the peptidase M3 family. Zn(2+) is required as a cofactor.

It localises to the mitochondrion matrix. It catalyses the reaction Release of an N-terminal octapeptide as second stage of processing of some proteins imported into the mitochondrion.. Its function is as follows. Cleaves proteins, imported into the mitochondrion, to their mature size. While most mitochondrial precursor proteins are processed to the mature form in one step by mitochondrial processing peptidase (MPP), the sequential cleavage by MIP of an octapeptide after initial processing by MPP is a required step for a subgroup of nuclear-encoded precursor proteins destined for the matrix or the inner membrane. This is Mitochondrial intermediate peptidase (OCT1) from Yarrowia lipolytica (strain CLIB 122 / E 150) (Yeast).